We begin with the raw amino-acid sequence, 347 residues long: Heat-inducible transcription repressor HrcA (347 aa).

It belongs to the HrcA family.

Functionally, negative regulator of class I heat shock genes (grpE-dnaK-dnaJ and groELS operons). Prevents heat-shock induction of these operons. The polypeptide is Heat-inducible transcription repressor HrcA (Lactococcus lactis subsp. cremoris (strain SK11)).